Reading from the N-terminus, the 500-residue chain is Lysine--tRNA ligase (500 aa).

The Mg(2+) site is built by E410 and E417.

It belongs to the class-II aminoacyl-tRNA synthetase family. In terms of assembly, homodimer. The cofactor is Mg(2+).

It localises to the cytoplasm. It catalyses the reaction tRNA(Lys) + L-lysine + ATP = L-lysyl-tRNA(Lys) + AMP + diphosphate. This Pseudomonas putida (strain ATCC 47054 / DSM 6125 / CFBP 8728 / NCIMB 11950 / KT2440) protein is Lysine--tRNA ligase.